We begin with the raw amino-acid sequence, 625 residues long: MQNTAKKATLPATALAALGVVFGDIGTSPLYALKESFHAAHGLGIQPENVLGILSIIFWCLMLIISIKYVAIVMRADNNGEGGIMALLALNLRKAKIADNKKIYMIAIGFIGASLFFGDGIITPAISVLSAVEGLSIATDVFDPFIMPIAIAIIVTLFLVQKHGTAFVGKFFGPITLVWFLSLGILGIHSVIQTPVVLGMFSPHWAIQFIYHHPIMTFFVMGAVVLTVTGGEALYADMGHFGPVPIRLAWFFVVLPCLVLNYAGQGALLLRDPAAIENPFYLLVPQWALYPMIIMATMATVIASQAVISGVFSLARQAIQLGYLPRLSIKHTSESEEGQIYVPFLNWLLLIAIIILILIFKTSSNLASAYGLAVTLTMLCDTILVAVFIYSAWKWSLPKVLLLIIPFFILESVLVGATSLKILSGGWVPLLIGAIAVTILMTWKRGRELTFAKLEHDTLSLDLFVKSIGNSVHWVPGDAVFMTGTPNVVPHAMLHNIKHNKVLHQRNILVTVVIEDVPFVAPEERITTETLAEHFFRIKIFYGFKDEMNVPKALMQAYEQLGLEYDLMHISFFISRDRIVHSVGDGMSPWREKLFISMQRNTSPVSDFYQIPTNRVVELGSQIEI.

Helical transmembrane passes span 13–33 (TALA…LYAL), 53–73 (ILSI…VAIV), 103–123 (IYMI…GIIT), 141–161 (VFDP…FLVQ), 172–192 (FGPI…HSVI), 206–226 (AIQF…AVVL), 250–270 (WFFV…ALLL), 282–302 (LLVP…ATVI), 340–360 (IYVP…ILIF), 369–389 (AYGL…AVFI), 400–420 (VLLL…ATSL), and 422–442 (ILSG…ILMT).

This sequence belongs to the HAK/KUP transporter (TC 2.A.72) family.

The protein localises to the cell inner membrane. The catalysed reaction is K(+)(in) + H(+)(in) = K(+)(out) + H(+)(out). In terms of biological role, transport of potassium into the cell. Likely operates as a K(+):H(+) symporter. This is Probable potassium transport system protein Kup from Acinetobacter baumannii (strain ACICU).